A 510-amino-acid chain; its full sequence is Bifunctional purine biosynthesis protein PurH (510 aa).

The MGS-like domain maps to Met-1–Cys-142.

It belongs to the PurH family.

It carries out the reaction (6R)-10-formyltetrahydrofolate + 5-amino-1-(5-phospho-beta-D-ribosyl)imidazole-4-carboxamide = 5-formamido-1-(5-phospho-D-ribosyl)imidazole-4-carboxamide + (6S)-5,6,7,8-tetrahydrofolate. It catalyses the reaction IMP + H2O = 5-formamido-1-(5-phospho-D-ribosyl)imidazole-4-carboxamide. Its pathway is purine metabolism; IMP biosynthesis via de novo pathway; 5-formamido-1-(5-phospho-D-ribosyl)imidazole-4-carboxamide from 5-amino-1-(5-phospho-D-ribosyl)imidazole-4-carboxamide (10-formyl THF route): step 1/1. It functions in the pathway purine metabolism; IMP biosynthesis via de novo pathway; IMP from 5-formamido-1-(5-phospho-D-ribosyl)imidazole-4-carboxamide: step 1/1. The polypeptide is Bifunctional purine biosynthesis protein PurH (Campylobacter jejuni subsp. jejuni serotype O:2 (strain ATCC 700819 / NCTC 11168)).